The primary structure comprises 109 residues: N-cym protein (109 aa).

As to quaternary structure, interacts with MYCN and GSK3B. In terms of tissue distribution, expressed in the neuronal cells of the cerebrum and cerebellum, spermatocytes of the testis, pancreatic cells and also the heart. Expressed in both primary and metastatic neuroblastomas and in thyroid tumors (at protein level). Expression is associated with poor prognosis in neuroblastoma. Expressed in the fetal brain, lung, liver and kidney at varying low levels.

Its subcellular location is the cytoplasm. The protein localises to the nucleus. Regulates stability of MYCN in neuroblastoma cells by inhibiting GSK3B-mediated MYCN phosphorylation. Inhibits GSK3B activity by promoting its phosphorylation at 'Ser-9'. The sequence is that of N-cym protein (MYCNOS) from Homo sapiens (Human).